We begin with the raw amino-acid sequence, 368 residues long: tRNA-specific 2-thiouridylase MnmA (368 aa).

ATP contacts are provided by residues 6-13 (ALSGGVDS) and Met32. Cys92 acts as the Nucleophile in catalysis. A disulfide bond links Cys92 and Cys186. Position 116 (Gly116) interacts with ATP. An interaction with tRNA region spans residues 134 to 136 (KDQ). The Cysteine persulfide intermediate role is filled by Cys186. The segment at 292–293 (RY) is interaction with tRNA.

The protein belongs to the MnmA/TRMU family.

It localises to the cytoplasm. It carries out the reaction S-sulfanyl-L-cysteinyl-[protein] + uridine(34) in tRNA + AH2 + ATP = 2-thiouridine(34) in tRNA + L-cysteinyl-[protein] + A + AMP + diphosphate + H(+). Its function is as follows. Catalyzes the 2-thiolation of uridine at the wobble position (U34) of tRNA, leading to the formation of s(2)U34. The sequence is that of tRNA-specific 2-thiouridylase MnmA from Campylobacter hominis (strain ATCC BAA-381 / DSM 21671 / CCUG 45161 / LMG 19568 / NCTC 13146 / CH001A).